Reading from the N-terminus, the 227-residue chain is Cytochrome c oxidase subunit 2 (227 aa).

Over 1–14 (MANHSQLGFQDASS) the chain is Mitochondrial intermembrane. A helical membrane pass occupies residues 15 to 45 (PIMEELVEFHDHALMVALAICSLVLYLLTLM). Topologically, residues 46-58 (LMEKLSSNTVDAQ) are mitochondrial matrix. A helical transmembrane segment spans residues 59 to 86 (EVELIWTILPAIVLVLLALPSLQILYMM). Over 87 to 227 (DEIDEPDLTL…FEAWSSLLSS (141 aa)) the chain is Mitochondrial intermembrane. Residues histidine 160, cysteine 195, glutamate 197, cysteine 199, histidine 203, and methionine 206 each coordinate Cu cation. A Mg(2+)-binding site is contributed by glutamate 197.

It belongs to the cytochrome c oxidase subunit 2 family. Component of the cytochrome c oxidase (complex IV, CIV), a multisubunit enzyme composed of 14 subunits. The complex is composed of a catalytic core of 3 subunits MT-CO1, MT-CO2 and MT-CO3, encoded in the mitochondrial DNA, and 11 supernumerary subunits COX4I, COX5A, COX5B, COX6A, COX6B, COX6C, COX7A, COX7B, COX7C, COX8 and NDUFA4, which are encoded in the nuclear genome. The complex exists as a monomer or a dimer and forms supercomplexes (SCs) in the inner mitochondrial membrane with NADH-ubiquinone oxidoreductase (complex I, CI) and ubiquinol-cytochrome c oxidoreductase (cytochrome b-c1 complex, complex III, CIII), resulting in different assemblies (supercomplex SCI(1)III(2)IV(1) and megacomplex MCI(2)III(2)IV(2)). Found in a complex with TMEM177, COA6, COX18, COX20, SCO1 and SCO2. Interacts with TMEM177 in a COX20-dependent manner. Interacts with COX20. Interacts with COX16. Cu cation serves as cofactor.

It localises to the mitochondrion inner membrane. The catalysed reaction is 4 Fe(II)-[cytochrome c] + O2 + 8 H(+)(in) = 4 Fe(III)-[cytochrome c] + 2 H2O + 4 H(+)(out). In terms of biological role, component of the cytochrome c oxidase, the last enzyme in the mitochondrial electron transport chain which drives oxidative phosphorylation. The respiratory chain contains 3 multisubunit complexes succinate dehydrogenase (complex II, CII), ubiquinol-cytochrome c oxidoreductase (cytochrome b-c1 complex, complex III, CIII) and cytochrome c oxidase (complex IV, CIV), that cooperate to transfer electrons derived from NADH and succinate to molecular oxygen, creating an electrochemical gradient over the inner membrane that drives transmembrane transport and the ATP synthase. Cytochrome c oxidase is the component of the respiratory chain that catalyzes the reduction of oxygen to water. Electrons originating from reduced cytochrome c in the intermembrane space (IMS) are transferred via the dinuclear copper A center (CU(A)) of subunit 2 and heme A of subunit 1 to the active site in subunit 1, a binuclear center (BNC) formed by heme A3 and copper B (CU(B)). The BNC reduces molecular oxygen to 2 water molecules using 4 electrons from cytochrome c in the IMS and 4 protons from the mitochondrial matrix. The sequence is that of Cytochrome c oxidase subunit 2 (MT-CO2) from Gallus gallus (Chicken).